The following is a 521-amino-acid chain: Jacalin-related lectin 38 (521 aa).

The region spanning 2 to 48 (MQPDHDLPYDLEGEILSHLPIQILARFRCVCKRWNTLFKERRFFNSD) is the F-box domain. Kelch repeat units follow at residues 145–190 (KHYK…PYSV), 326–373 (YIYI…ITQH), and 486–521 (MSFVLGGARGSKIIGFYGRSSDLYLTAFGVHFSPLP). A Jacalin-type lectin domain is found at 377-519 (SRFAPLRGIQ…LTAFGVHFSP (143 aa)).

This sequence belongs to the jacalin lectin family.

This is Jacalin-related lectin 38 (JAL38) from Arabidopsis thaliana (Mouse-ear cress).